Reading from the N-terminus, the 133-residue chain is Small heat shock protein ibp (133 aa).

The sHSP domain maps to 11 to 126 (EQPLSENPNY…KPKKISINEE (116 aa)).

This sequence belongs to the small heat shock protein (HSP20) family.

The sequence is that of Small heat shock protein ibp (ibp) from Wigglesworthia glossinidia brevipalpis.